We begin with the raw amino-acid sequence, 97 residues long: C-C motif chemokine 7 (97 aa).

Residues 1–23 form the signal peptide; it reads MRISATLLCLLLIAAAFSIQVWA. At Gln-24 the chain carries Pyrrolidone carboxylic acid. N-linked (GlcNAc...) asparagine glycosylation occurs at Asn-29. 2 cysteine pairs are disulfide-bonded: Cys-33-Cys-57 and Cys-34-Cys-73.

Belongs to the intercrine beta (chemokine CC) family. In terms of assembly, monomer. Interacts with TNFAIP6 (via Link domain).

It localises to the secreted. Functionally, chemotactic factor that attracts monocytes and eosinophils, but not neutrophils. Augments monocyte anti-tumor activity. The protein is C-C motif chemokine 7 (Ccl7) of Mus musculus (Mouse).